A 481-amino-acid polypeptide reads, in one-letter code: Serine--tRNA ligase (481 aa).

284 to 286 (TAE) contacts L-serine. An ATP-binding site is contributed by 315 to 317 (RAE). Glu338 lines the L-serine pocket. Residue 405–408 (EISS) participates in ATP binding. Ser440 provides a ligand contact to L-serine.

The protein belongs to the class-II aminoacyl-tRNA synthetase family. Type-1 seryl-tRNA synthetase subfamily. Homodimer. The tRNA molecule binds across the dimer.

It localises to the cytoplasm. It catalyses the reaction tRNA(Ser) + L-serine + ATP = L-seryl-tRNA(Ser) + AMP + diphosphate + H(+). The catalysed reaction is tRNA(Sec) + L-serine + ATP = L-seryl-tRNA(Sec) + AMP + diphosphate + H(+). It functions in the pathway aminoacyl-tRNA biosynthesis; selenocysteinyl-tRNA(Sec) biosynthesis; L-seryl-tRNA(Sec) from L-serine and tRNA(Sec): step 1/1. In terms of biological role, catalyzes the attachment of serine to tRNA(Ser). Is also able to aminoacylate tRNA(Sec) with serine, to form the misacylated tRNA L-seryl-tRNA(Sec), which will be further converted into selenocysteinyl-tRNA(Sec). The protein is Serine--tRNA ligase of Rhodopseudomonas palustris (strain BisB18).